A 281-amino-acid polypeptide reads, in one-letter code: NAC domain-containing protein 6 (281 aa).

In terms of domain architecture, NAC spans 4–156 (LPVGSRFCPT…QDALTGFADQ (153 aa)). 2 disordered regions span residues 84–109 (GGSE…QKGD) and 211–249 (LEGH…VTQE). Residues 94–109 (NDGKKEIKDGHMQKGD) are compositionally biased toward basic and acidic residues. The DNA-binding element occupies 109 to 162 (DGLRASDDLQKVVLCRIRYKKEANVNEFGLVNHQAHQTQDALTGFADQLEMMLE). The span at 229 to 239 (QQQQQQQQQQQ) shows a compositional bias: low complexity.

It localises to the nucleus. The sequence is that of NAC domain-containing protein 6 (NAC006) from Arabidopsis thaliana (Mouse-ear cress).